Reading from the N-terminus, the 393-residue chain is Bifunctional enzyme Fae/Hps (393 aa).

The segment at 1–161 is formaldehyde-activating enzyme; the sequence is MYLIGEALIG…HEKDRAAHAV (161 aa). The active-site Proton donor is H17. 5 residues coordinate substrate: D19, L48, K66, T68, and Q83. The tract at residues 162–393 is 3-hexulose-6-phosphate synthase; that stretch reads MGFKVPRLWD…IDQFRIMTDF (232 aa).

In the N-terminal section; belongs to the formaldehyde-activating enzyme family. It in the C-terminal section; belongs to the HPS/KGPDC family. HPS subfamily.

The enzyme catalyses 5,6,7,8-tetrahydromethanopterin + formaldehyde = 5,10-methylenetetrahydromethanopterin + H2O. The catalysed reaction is D-ribulose 5-phosphate + formaldehyde = D-arabino-hex-3-ulose 6-phosphate. The protein operates within carbohydrate biosynthesis; D-ribose 5-phosphate biosynthesis. Functionally, catalyzes the condensation of formaldehyde with tetrahydromethanopterin (H(4)MPT) to 5,10-methylenetetrahydromethanopterin. Catalyzes the reversible formation of ribulose-5-phosphate and formaldehyde from 3-hexulose-6-phosphate. This chain is Bifunctional enzyme Fae/Hps, found in Methanospirillum hungatei JF-1 (strain ATCC 27890 / DSM 864 / NBRC 100397 / JF-1).